Consider the following 512-residue polypeptide: Bifunctional purine biosynthesis protein PurH (512 aa).

In terms of domain architecture, MGS-like spans 1 to 150 (MIGEERVVRA…KNFPAVLVLV (150 aa)).

It belongs to the PurH family.

It carries out the reaction (6R)-10-formyltetrahydrofolate + 5-amino-1-(5-phospho-beta-D-ribosyl)imidazole-4-carboxamide = 5-formamido-1-(5-phospho-D-ribosyl)imidazole-4-carboxamide + (6S)-5,6,7,8-tetrahydrofolate. It catalyses the reaction IMP + H2O = 5-formamido-1-(5-phospho-D-ribosyl)imidazole-4-carboxamide. The protein operates within purine metabolism; IMP biosynthesis via de novo pathway; 5-formamido-1-(5-phospho-D-ribosyl)imidazole-4-carboxamide from 5-amino-1-(5-phospho-D-ribosyl)imidazole-4-carboxamide (10-formyl THF route): step 1/1. It participates in purine metabolism; IMP biosynthesis via de novo pathway; IMP from 5-formamido-1-(5-phospho-D-ribosyl)imidazole-4-carboxamide: step 1/1. This Chloroflexus aurantiacus (strain ATCC 29366 / DSM 635 / J-10-fl) protein is Bifunctional purine biosynthesis protein PurH.